We begin with the raw amino-acid sequence, 366 residues long: Anhydro-N-acetylmuramic acid kinase (366 aa).

An ATP-binding site is contributed by glycine 10–aspartate 17.

This sequence belongs to the anhydro-N-acetylmuramic acid kinase family.

The enzyme catalyses 1,6-anhydro-N-acetyl-beta-muramate + ATP + H2O = N-acetyl-D-muramate 6-phosphate + ADP + H(+). Its pathway is amino-sugar metabolism; 1,6-anhydro-N-acetylmuramate degradation. It participates in cell wall biogenesis; peptidoglycan recycling. Its function is as follows. Catalyzes the specific phosphorylation of 1,6-anhydro-N-acetylmuramic acid (anhMurNAc) with the simultaneous cleavage of the 1,6-anhydro ring, generating MurNAc-6-P. Is required for the utilization of anhMurNAc either imported from the medium or derived from its own cell wall murein, and thus plays a role in cell wall recycling. The sequence is that of Anhydro-N-acetylmuramic acid kinase from Nitrobacter winogradskyi (strain ATCC 25391 / DSM 10237 / CIP 104748 / NCIMB 11846 / Nb-255).